The sequence spans 99 residues: Large ribosomal subunit protein bL21 (99 aa).

The protein belongs to the bacterial ribosomal protein bL21 family. In terms of assembly, part of the 50S ribosomal subunit. Contacts protein L20.

In terms of biological role, this protein binds to 23S rRNA in the presence of protein L20. The polypeptide is Large ribosomal subunit protein bL21 (Deinococcus geothermalis (strain DSM 11300 / CIP 105573 / AG-3a)).